The primary structure comprises 181 residues: Transmembrane protein 47 (181 aa).

Alanine 2 carries the N-acetylalanine modification. The next 4 membrane-spanning stretches (helical) occupy residues 21–41, 83–103, 115–135, and 152–172; these read LVGL…VLSP, ALLL…LISI, VAVM…LYPI, and GYGL…LYCL.

Belongs to the TMEM47 family. In terms of assembly, interacts with CTNNB1, CTNNA1, PRKCI, PARD6B. Interacts with FYB1. Expressed in podocytes (at protein level).

Its subcellular location is the membrane. It localises to the cell junction. It is found in the adherens junction. Regulates cell junction organization in epithelial cells. May play a role in the transition from adherens junction to tight junction assembly. May regulate F-actin polymerization required for tight junctional localization dynamics and affect the junctional localization of PARD6B. During podocyte differentiation may negatively regulate activity of FYN and subsequently the abundance of nephrin. This chain is Transmembrane protein 47 (Tmem47), found in Mus musculus (Mouse).